The primary structure comprises 178 residues: Adenine phosphoribosyltransferase (178 aa).

The protein belongs to the purine/pyrimidine phosphoribosyltransferase family. In terms of assembly, homodimer.

The protein localises to the cytoplasm. It catalyses the reaction AMP + diphosphate = 5-phospho-alpha-D-ribose 1-diphosphate + adenine. The protein operates within purine metabolism; AMP biosynthesis via salvage pathway; AMP from adenine: step 1/1. Catalyzes a salvage reaction resulting in the formation of AMP, that is energically less costly than de novo synthesis. This is Adenine phosphoribosyltransferase from Pseudoalteromonas atlantica (strain T6c / ATCC BAA-1087).